Consider the following 556-residue polypeptide: CDP-diacylglycerol--glycerol-3-phosphate 3-phosphatidyltransferase, mitochondrial (556 aa).

The N-terminal 28 residues, 1 to 28 (MAVAAAAAAGPVFWRRLLGLLPGRPGLA), are a transit peptide targeting the mitochondrion. Position 49 is a phosphoserine (S49). Residue 124-131 (ASLYLGTG) participates in ATP binding. 2 PLD phosphodiesterase domains span residues 215–241 (TIGL…SDSY) and 460–493 (RGWT…GYRS). Active-site residues include H220, K222, and D227.

The protein belongs to the CDP-alcohol phosphatidyltransferase class-II family.

It localises to the mitochondrion. It carries out the reaction a CDP-1,2-diacyl-sn-glycerol + sn-glycerol 3-phosphate = a 1,2-diacyl-sn-glycero-3-phospho-(1'-sn-glycero-3'-phosphate) + CMP + H(+). It participates in phospholipid metabolism; phosphatidylglycerol biosynthesis; phosphatidylglycerol from CDP-diacylglycerol: step 1/2. Activated by calcium and magnesium and inhibited by other bivalent cations. Functions in the biosynthesis of the anionic phospholipids phosphatidylglycerol and cardiolipin. This chain is CDP-diacylglycerol--glycerol-3-phosphate 3-phosphatidyltransferase, mitochondrial (PGS1), found in Pongo abelii (Sumatran orangutan).